The sequence spans 130 residues: Glycine cleavage system H protein (130 aa).

Residues 25-106 enclose the Lipoyl-binding domain; that stretch reads MALIGISDFA…PFDSWMIKVK (82 aa). N6-lipoyllysine is present on K66.

It belongs to the GcvH family. The glycine cleavage system is composed of four proteins: P, T, L and H. It depends on (R)-lipoate as a cofactor.

Functionally, the glycine cleavage system catalyzes the degradation of glycine. The H protein shuttles the methylamine group of glycine from the P protein to the T protein. The chain is Glycine cleavage system H protein from Leptospira interrogans serogroup Icterohaemorrhagiae serovar copenhageni (strain Fiocruz L1-130).